Reading from the N-terminus, the 298-residue chain is Short-chain dehydrogenase reductase 4 (298 aa).

50-74 (IITGGASGIGAEAVRLFTDHGAKVV) contacts NAD(+). Ser-182 is a substrate binding site. The Proton acceptor role is filled by Tyr-195.

This sequence belongs to the short-chain dehydrogenases/reductases (SDR) family.

The protein is Short-chain dehydrogenase reductase 4 (SDR4) of Arabidopsis thaliana (Mouse-ear cress).